A 202-amino-acid chain; its full sequence is Ras-related protein Rab-1A (202 aa).

GTP contacts are provided by residues 15–23 (GDSGVGKSC), 33–40 (YSESFIST), 63–67 (DTAGQ), 121–124 (NKSD), and 151–153 (SAK). An Effector region motif is present at residues 37–45 (FISTIGVDF). The tract at residues 180-202 (QTVDKNKVVPGSSAPISPKSGCC) is disordered. S-geranylgeranyl cysteine attachment occurs at residues C201 and C202.

Belongs to the small GTPase superfamily. Rab family.

It is found in the cell membrane. The polypeptide is Ras-related protein Rab-1A (rab1A) (Dictyostelium discoideum (Social amoeba)).